Here is a 366-residue protein sequence, read N- to C-terminus: MLKTISGTLALSLIIAASVHQAQAATTYNAVVSKSSSDGKTFKTIADAIASAPAGSTPFVILIKNGVYNERLTITRNNLHLKGESRNGAVIAAATAAGTLKSDGSKWGTAGSSTITISAKDFSAQSLTIRNDFDFPANQAKSDSDSSKIKDTQAVALYVTKSGDRAYFKDVSLVGYQDTLYVSGGRSFFSDCRISGTVDFIFGDGTALFNNCDLVSRYRADVKSGNVSGYLTAPSTNINQKYGLVITNSRVIRESDSVPAKSYGLGRPWHPTTTFSDGRYADPNAIGQTVFLNTSMDNHIYGWDKMSGKDKNGNTIWFNPEDSRFFEYKSYGAGATVSKDRRQLTDAQAAEYTQSKVLGDWTPTLP.

The first 24 residues, 1-24 (MLKTISGTLALSLIIAASVHQAQA), serve as a signal peptide directing secretion. Substrate contacts are provided by Thr-109 and Gln-153. The active-site Proton donor is Asp-178. Cys-192 and Cys-212 are joined by a disulfide. Catalysis depends on Asp-199, which acts as the Nucleophile. 6 residues coordinate substrate: Arg-219, Asn-226, Tyr-230, Arg-267, Trp-269, and Thr-272.

Belongs to the pectinesterase family. As to quaternary structure, monomer.

Its subcellular location is the secreted. The enzyme catalyses [(1-&gt;4)-alpha-D-galacturonosyl methyl ester](n) + n H2O = [(1-&gt;4)-alpha-D-galacturonosyl](n) + n methanol + n H(+). It functions in the pathway glycan metabolism; pectin degradation; 2-dehydro-3-deoxy-D-gluconate from pectin: step 1/5. Catalyzes the first step in maceration and soft-rotting of plant tissue. This Dickeya dadantii (strain 3937) (Erwinia chrysanthemi (strain 3937)) protein is Pectinesterase A.